A 160-amino-acid chain; its full sequence is Major pollen allergen Bet v 1-B (160 aa).

The brassinolide site is built by K55, Y82, Y84, and N101.

Belongs to the BetVI family.

The protein localises to the cytoplasm. Functionally, may be a general steroid carrier protein. The chain is Major pollen allergen Bet v 1-B (BETV1B) from Betula pendula (European white birch).